Reading from the N-terminus, the 242-residue chain is Ribose-5-phosphate isomerase A (242 aa).

Residues Ser39–Thr42, Asp95–Asp98, and Lys108–Gly111 each bind substrate. The active-site Proton acceptor is Glu117. A substrate-binding site is contributed by Lys135.

The protein belongs to the ribose 5-phosphate isomerase family. Homodimer.

The enzyme catalyses aldehydo-D-ribose 5-phosphate = D-ribulose 5-phosphate. Its pathway is carbohydrate degradation; pentose phosphate pathway; D-ribose 5-phosphate from D-ribulose 5-phosphate (non-oxidative stage): step 1/1. Catalyzes the reversible conversion of ribose-5-phosphate to ribulose 5-phosphate. The polypeptide is Ribose-5-phosphate isomerase A (Chlamydia trachomatis serovar L2 (strain ATCC VR-902B / DSM 19102 / 434/Bu)).